A 146-amino-acid polypeptide reads, in one-letter code: Anti-sigma F factor (146 aa).

The protein belongs to the anti-sigma-factor family.

It catalyses the reaction L-seryl-[protein] + ATP = O-phospho-L-seryl-[protein] + ADP + H(+). The enzyme catalyses L-threonyl-[protein] + ATP = O-phospho-L-threonyl-[protein] + ADP + H(+). Binds to sigma F and blocks its ability to form an RNA polymerase holoenzyme (E-sigma F). Phosphorylates SpoIIAA on a serine residue. This phosphorylation may enable SpoIIAA to act as an anti-anti-sigma factor that counteracts SpoIIAB and thus releases sigma F from inhibition. This Oceanobacillus iheyensis (strain DSM 14371 / CIP 107618 / JCM 11309 / KCTC 3954 / HTE831) protein is Anti-sigma F factor.